Here is a 257-residue protein sequence, read N- to C-terminus: NAD-capped RNA hydrolase NudC (257 aa).

Position 69 (Arg69) interacts with substrate. Cys98 and Cys101 together coordinate Zn(2+). Glu111 lines the substrate pocket. Zn(2+) is bound by residues Cys116 and Cys119. Tyr124 lines the substrate pocket. The region spanning Pro125–Thr248 is the Nudix hydrolase domain. Residues Ala158, Glu174, and Glu178 each coordinate a divalent metal cation. The Nudix box signature appears at Gly159–Gly180. Substrate is bound at residue Gln192–Ser199. An a divalent metal cation-binding site is contributed by Glu219. A substrate-binding site is contributed by Ala241.

This sequence belongs to the Nudix hydrolase family. NudC subfamily. Homodimer. It depends on Mg(2+) as a cofactor. Requires Mn(2+) as cofactor. Zn(2+) is required as a cofactor.

The catalysed reaction is a 5'-end NAD(+)-phospho-ribonucleoside in mRNA + H2O = a 5'-end phospho-adenosine-phospho-ribonucleoside in mRNA + beta-nicotinamide D-ribonucleotide + 2 H(+). It catalyses the reaction NAD(+) + H2O = beta-nicotinamide D-ribonucleotide + AMP + 2 H(+). The enzyme catalyses NADH + H2O = reduced beta-nicotinamide D-ribonucleotide + AMP + 2 H(+). In terms of biological role, mRNA decapping enzyme that specifically removes the nicotinamide adenine dinucleotide (NAD) cap from a subset of mRNAs by hydrolyzing the diphosphate linkage to produce nicotinamide mononucleotide (NMN) and 5' monophosphate mRNA. The NAD-cap is present at the 5'-end of some mRNAs and stabilizes RNA against 5'-processing. Has preference for mRNAs with a 5'-end purine. Catalyzes the hydrolysis of a broad range of dinucleotide pyrophosphates. The polypeptide is NAD-capped RNA hydrolase NudC (Klebsiella pneumoniae (strain 342)).